Here is a 207-residue protein sequence, read N- to C-terminus: Ras-related protein Rab7 (207 aa).

GTP contacts are provided by residues 15-22, 63-67, and 125-128; these read GDSGVGKT, DTAGQ, and NKID. Residues cysteine 205 and cysteine 207 are each lipidated (S-geranylgeranyl cysteine). Cysteine 207 bears the Cysteine methyl ester mark.

Belongs to the small GTPase superfamily. Rab family.

It localises to the cell membrane. Protein transport. Probably involved in vesicular traffic. The protein is Ras-related protein Rab7 of Prunus armeniaca (Apricot).